Reading from the N-terminus, the 266-residue chain is Dioicin-2 (266 aa).

2 cysteine pairs are disulfide-bonded: C32–C263 and C85–C102. E176 is an active-site residue.

The protein resides in the secreted. The protein localises to the extracellular space. It is found in the golgi apparatus. It localises to the vacuole. It catalyses the reaction Endohydrolysis of the N-glycosidic bond at one specific adenosine on the 28S rRNA.. Nicks pBR322 dsDNA. Has adenine polynucleotide glycosidase activity on herring sperm ssDNA. This chain is Dioicin-2, found in Phytolacca dioica (Bella sombra tree).